We begin with the raw amino-acid sequence, 427 residues long: Serine hydroxymethyltransferase (427 aa).

Residues Leu-122 and 126–128 (GHL) each bind (6S)-5,6,7,8-tetrahydrofolate. An N6-(pyridoxal phosphate)lysine modification is found at Lys-231. Residues Glu-247 and 355-357 (SPF) each bind (6S)-5,6,7,8-tetrahydrofolate.

This sequence belongs to the SHMT family. As to quaternary structure, homodimer. It depends on pyridoxal 5'-phosphate as a cofactor.

The protein localises to the cytoplasm. The catalysed reaction is (6R)-5,10-methylene-5,6,7,8-tetrahydrofolate + glycine + H2O = (6S)-5,6,7,8-tetrahydrofolate + L-serine. It functions in the pathway one-carbon metabolism; tetrahydrofolate interconversion. It participates in amino-acid biosynthesis; glycine biosynthesis; glycine from L-serine: step 1/1. Catalyzes the reversible interconversion of serine and glycine with tetrahydrofolate (THF) serving as the one-carbon carrier. This reaction serves as the major source of one-carbon groups required for the biosynthesis of purines, thymidylate, methionine, and other important biomolecules. Also exhibits THF-independent aldolase activity toward beta-hydroxyamino acids, producing glycine and aldehydes, via a retro-aldol mechanism. In Crocosphaera subtropica (strain ATCC 51142 / BH68) (Cyanothece sp. (strain ATCC 51142)), this protein is Serine hydroxymethyltransferase.